The chain runs to 389 residues: Ethanolamine-phosphate cytidylyltransferase (389 aa).

The tract at residues 1–20 (MIRNGRGAAGGAEQPGPGGR) is disordered. CTP is bound by residues 221-222 (AF), 229-232 (HVDF), K259, 307-310 (HGKT), and 336-340 (SGSNL). Position 338 is a phosphoserine (S338). A phosphothreonine mark is found at T341 and T342.

This sequence belongs to the cytidylyltransferase family. In terms of tissue distribution, strongest expression in liver, heart, and skeletal muscle.

The enzyme catalyses phosphoethanolamine + CTP + H(+) = CDP-ethanolamine + diphosphate. The protein operates within phospholipid metabolism; phosphatidylethanolamine biosynthesis; phosphatidylethanolamine from ethanolamine: step 2/3. In terms of biological role, ethanolamine-phosphate cytidylyltransferase that catalyzes the second step in the synthesis of phosphatidylethanolamine (PE) from ethanolamine via the CDP-ethanolamine pathway. Phosphatidylethanolamine is a dominant inner-leaflet phospholipid in cell membranes, where it plays a role in membrane function by structurally stabilizing membrane-anchored proteins, and participates in important cellular processes such as cell division, cell fusion, blood coagulation, and apoptosis. This Homo sapiens (Human) protein is Ethanolamine-phosphate cytidylyltransferase (PCYT2).